An 862-amino-acid polypeptide reads, in one-letter code: DNA mismatch repair protein MutS (862 aa).

604–611 (GPNMAGKS) is a binding site for ATP.

The protein belongs to the DNA mismatch repair MutS family.

Functionally, this protein is involved in the repair of mismatches in DNA. It is possible that it carries out the mismatch recognition step. This protein has a weak ATPase activity. In Brevibacillus brevis (strain 47 / JCM 6285 / NBRC 100599), this protein is DNA mismatch repair protein MutS.